The primary structure comprises 305 residues: UDP-3-O-acyl-N-acetylglucosamine deacetylase (305 aa).

The Zn(2+) site is built by histidine 79, histidine 238, and aspartate 242. Residue histidine 265 is the Proton donor of the active site.

The protein belongs to the LpxC family. Zn(2+) is required as a cofactor.

It catalyses the reaction a UDP-3-O-[(3R)-3-hydroxyacyl]-N-acetyl-alpha-D-glucosamine + H2O = a UDP-3-O-[(3R)-3-hydroxyacyl]-alpha-D-glucosamine + acetate. It participates in glycolipid biosynthesis; lipid IV(A) biosynthesis; lipid IV(A) from (3R)-3-hydroxytetradecanoyl-[acyl-carrier-protein] and UDP-N-acetyl-alpha-D-glucosamine: step 2/6. Its function is as follows. Catalyzes the hydrolysis of UDP-3-O-myristoyl-N-acetylglucosamine to form UDP-3-O-myristoylglucosamine and acetate, the committed step in lipid A biosynthesis. This chain is UDP-3-O-acyl-N-acetylglucosamine deacetylase, found in Vibrio parahaemolyticus serotype O3:K6 (strain RIMD 2210633).